The sequence spans 56 residues: Large ribosomal subunit protein bL33 (56 aa).

The span at 1–12 shows a compositional bias: basic and acidic residues; the sequence is MASKGGRDKIKL. The segment at 1-30 is disordered; that stretch reads MASKGGRDKIKLESTAGTGHFYTTTKNKRT. Over residues 15–25 the composition is skewed to polar residues; it reads TAGTGHFYTTT.

This sequence belongs to the bacterial ribosomal protein bL33 family.

In Ralstonia nicotianae (strain ATCC BAA-1114 / GMI1000) (Ralstonia solanacearum), this protein is Large ribosomal subunit protein bL33.